Reading from the N-terminus, the 168-residue chain is Peptidyl-Lys metalloendopeptidase (168 aa).

2 disulfide bridges follow: C6/C76 and C78/C98. Position 118 (H118) interacts with Zn(2+). The active site involves E119. Zn(2+) contacts are provided by H122 and D131.

Zn(2+) is required as a cofactor.

Its subcellular location is the secreted. The enzyme catalyses Preferential cleavage in proteins: -Xaa-|-Lys- (in which Xaa may be Pro).. With respect to regulation, inhibited by chelating agents such as EDTA and 1,10-phenanthroline. The protein is Peptidyl-Lys metalloendopeptidase (MEP) of Pleurotus ostreatus (Oyster mushroom).